Consider the following 548-residue polypeptide: Esterase-5A (548 aa).

Residues 1 to 19 (MHLVRWLICLIQLWIQLGA) form the signal peptide. Residues Cys-87 and Cys-106 are joined by a disulfide bond. N-linked (GlcNAc...) asparagine glycans are attached at residues Asn-95 and Asn-116. Ser-210 serves as the catalytic Acyl-ester intermediate. Cysteines 262 and 274 form a disulfide. An N-linked (GlcNAc...) asparagine glycan is attached at Asn-479. Cys-518 and Cys-539 are disulfide-bonded.

Belongs to the type-B carboxylesterase/lipase family.

It is found in the secreted. The catalysed reaction is a carboxylic ester + H2O = an alcohol + a carboxylate + H(+). The chain is Esterase-5A (Est-5A) from Drosophila persimilis (Fruit fly).